The following is a 404-amino-acid chain: Tryptophan synthase beta chain (404 aa).

At K98 the chain carries N6-(pyridoxal phosphate)lysine.

It belongs to the TrpB family. As to quaternary structure, tetramer of two alpha and two beta chains. The cofactor is pyridoxal 5'-phosphate.

It catalyses the reaction (1S,2R)-1-C-(indol-3-yl)glycerol 3-phosphate + L-serine = D-glyceraldehyde 3-phosphate + L-tryptophan + H2O. It functions in the pathway amino-acid biosynthesis; L-tryptophan biosynthesis; L-tryptophan from chorismate: step 5/5. The beta subunit is responsible for the synthesis of L-tryptophan from indole and L-serine. The chain is Tryptophan synthase beta chain from Rhodopseudomonas palustris (strain BisA53).